The sequence spans 81 residues: Photosystem I iron-sulfur center (81 aa).

2 4Fe-4S ferredoxin-type domains span residues 2–31 (SHSV…MVPW) and 37–68 (GQIA…VRVY). Positions 11, 14, 17, 21, 48, 51, 54, and 58 each coordinate [4Fe-4S] cluster.

As to quaternary structure, the cyanobacterial PSI reaction center is composed of one copy each of PsaA,B,C,D,E,F,I,J,K,L,M and X, and forms trimeric complexes. It depends on [4Fe-4S] cluster as a cofactor.

Its subcellular location is the cellular thylakoid membrane. It carries out the reaction reduced [plastocyanin] + hnu + oxidized [2Fe-2S]-[ferredoxin] = oxidized [plastocyanin] + reduced [2Fe-2S]-[ferredoxin]. Apoprotein for the two 4Fe-4S centers FA and FB of photosystem I (PSI); essential for photochemical activity. FB is the terminal electron acceptor of PSI, donating electrons to ferredoxin. The C-terminus interacts with PsaA/B/D and helps assemble the protein into the PSI complex. Required for binding of PsaD and PsaE to PSI. PSI is a plastocyanin/cytochrome c6-ferredoxin oxidoreductase, converting photonic excitation into a charge separation, which transfers an electron from the donor P700 chlorophyll pair to the spectroscopically characterized acceptors A0, A1, FX, FA and FB in turn. The chain is Photosystem I iron-sulfur center from Prochlorococcus marinus (strain SARG / CCMP1375 / SS120).